The sequence spans 167 residues: Transmembrane protein 220 (167 aa).

A run of 5 helical transmembrane segments spans residues 10 to 30, 40 to 60, 69 to 89, 104 to 122, and 130 to 150; these read PGLW…AAVV, WVVV…NPLV, VSAI…YHFL, ELSG…HSSS, and MHLA…VYVH.

It localises to the membrane. This Mus musculus (Mouse) protein is Transmembrane protein 220 (Tmem220).